The sequence spans 363 residues: NAD kinase 1 (363 aa).

Aspartate 68 (proton acceptor) is an active-site residue. NAD(+)-binding positions include 68–69 (DG), arginine 73, 175–176 (ND), arginine 186, aspartate 205, alanine 240, and glutamine 275.

Belongs to the NAD kinase family. It depends on a divalent metal cation as a cofactor.

Its subcellular location is the cytoplasm. It carries out the reaction NAD(+) + ATP = ADP + NADP(+) + H(+). In terms of biological role, involved in the regulation of the intracellular balance of NAD and NADP, and is a key enzyme in the biosynthesis of NADP. Catalyzes specifically the phosphorylation on 2'-hydroxyl of the adenosine moiety of NAD to yield NADP. The polypeptide is NAD kinase 1 (Streptomyces coelicolor (strain ATCC BAA-471 / A3(2) / M145)).